Here is a 281-residue protein sequence, read N- to C-terminus: Bis(5'-nucleosyl)-tetraphosphatase, symmetrical (281 aa).

Belongs to the Ap4A hydrolase family.

It catalyses the reaction P(1),P(4)-bis(5'-adenosyl) tetraphosphate + H2O = 2 ADP + 2 H(+). Hydrolyzes diadenosine 5',5'''-P1,P4-tetraphosphate to yield ADP. The sequence is that of Bis(5'-nucleosyl)-tetraphosphatase, symmetrical from Acidovorax ebreus (strain TPSY) (Diaphorobacter sp. (strain TPSY)).